Reading from the N-terminus, the 288-residue chain is tRNA pseudouridine synthase A (288 aa).

D59 (nucleophile) is an active-site residue. Y134 serves as a coordination point for substrate.

This sequence belongs to the tRNA pseudouridine synthase TruA family. Homodimer.

The enzyme catalyses uridine(38/39/40) in tRNA = pseudouridine(38/39/40) in tRNA. Functionally, formation of pseudouridine at positions 38, 39 and 40 in the anticodon stem and loop of transfer RNAs. In Leifsonia xyli subsp. xyli (strain CTCB07), this protein is tRNA pseudouridine synthase A.